Reading from the N-terminus, the 198-residue chain is Neutrophil gelatinase-associated lipocalin (198 aa).

A signal peptide spans 1-20 (MPLGLLWLGLALLGALHAQA). Gln-21 carries the pyrrolidone carboxylic acid modification. 72-74 (YAT) contributes to the a carboxymycobactin binding site. Residue Asn-85 is glycosylated (N-linked (GlcNAc...) asparagine). Cys-96 and Cys-195 are disulfide-bonded. Position 126 (Tyr-126) interacts with enterobactin. 3 residues coordinate a carboxymycobactin: Lys-145, Lys-154, and Tyr-158. Lys-154 contributes to the enterobactin binding site.

The protein belongs to the calycin superfamily. Lipocalin family. Monomer. Homodimer; disulfide-linked. Heterodimer; disulfide-linked with MMP9. As to expression, detected in neutrophils (at protein level). Expressed in bone marrow and in tissues that are prone to exposure to microorganism. High expression is found in bone marrow as well as in uterus, prostate, salivary gland, stomach, appendix, colon, trachea and lung. Expressed in the medullary tubules of the kidney. Not found in the small intestine or peripheral blood leukocytes.

It localises to the secreted. It is found in the cytoplasmic granule lumen. The protein resides in the cytoplasmic vesicle lumen. Its function is as follows. Iron-trafficking protein involved in multiple processes such as apoptosis, innate immunity and renal development. Binds iron through association with 2,3-dihydroxybenzoic acid (2,3-DHBA), a siderophore that shares structural similarities with bacterial enterobactin, and delivers or removes iron from the cell, depending on the context. Iron-bound form (holo-24p3) is internalized following binding to the SLC22A17 (24p3R) receptor, leading to release of iron and subsequent increase of intracellular iron concentration. In contrast, association of the iron-free form (apo-24p3) with the SLC22A17 (24p3R) receptor is followed by association with an intracellular siderophore, iron chelation and iron transfer to the extracellular medium, thereby reducing intracellular iron concentration. Involved in apoptosis due to interleukin-3 (IL3) deprivation: iron-loaded form increases intracellular iron concentration without promoting apoptosis, while iron-free form decreases intracellular iron levels, inducing expression of the proapoptotic protein BCL2L11/BIM, resulting in apoptosis. Involved in innate immunity; limits bacterial proliferation by sequestering iron bound to microbial siderophores, such as enterobactin. Can also bind siderophores from M.tuberculosis. The polypeptide is Neutrophil gelatinase-associated lipocalin (LCN2) (Homo sapiens (Human)).